The chain runs to 430 residues: Adenylosuccinate synthetase (430 aa).

GTP-binding positions include 13–19 (GDEGKGK) and 41–43 (GHT). The active-site Proton acceptor is the aspartate 14. Positions 14 and 41 each coordinate Mg(2+). Residues 14 to 17 (DEGK), 39 to 42 (NAGH), threonine 130, arginine 144, glutamine 225, threonine 240, and arginine 304 each bind IMP. The active-site Proton donor is the histidine 42. Residue 300–306 (STTGRAR) participates in substrate binding. GTP contacts are provided by residues arginine 306, 332 to 334 (KLD), and 414 to 416 (STG).

Belongs to the adenylosuccinate synthetase family. As to quaternary structure, homodimer. The cofactor is Mg(2+).

Its subcellular location is the cytoplasm. The catalysed reaction is IMP + L-aspartate + GTP = N(6)-(1,2-dicarboxyethyl)-AMP + GDP + phosphate + 2 H(+). The protein operates within purine metabolism; AMP biosynthesis via de novo pathway; AMP from IMP: step 1/2. Its function is as follows. Plays an important role in the de novo pathway of purine nucleotide biosynthesis. Catalyzes the first committed step in the biosynthesis of AMP from IMP. The protein is Adenylosuccinate synthetase of Pseudomonas putida (strain ATCC 700007 / DSM 6899 / JCM 31910 / BCRC 17059 / LMG 24140 / F1).